The primary structure comprises 158 residues: UPF0145 protein Psyc_1853 (158 aa).

Over residues 113-122 (IYQSSNQPPS) the composition is skewed to polar residues. Residues 113-158 (IYQSSNQPPSHHSGHSQYEEPVPSAAQPSTTAQANDDLPRFNPFGE) form a disordered region.

This sequence belongs to the UPF0145 family.

In Psychrobacter arcticus (strain DSM 17307 / VKM B-2377 / 273-4), this protein is UPF0145 protein Psyc_1853.